We begin with the raw amino-acid sequence, 347 residues long: UPF0284 protein M1425_0030 (347 aa).

The protein belongs to the UPF0284 family.

The sequence is that of UPF0284 protein M1425_0030 from Saccharolobus islandicus (strain M.14.25 / Kamchatka #1) (Sulfolobus islandicus).